The chain runs to 214 residues: Small ribosomal subunit protein uS5 (214 aa).

The region spanning L55 to V118 is the S5 DRBM domain.

The protein belongs to the universal ribosomal protein uS5 family. In terms of assembly, part of the 30S ribosomal subunit. Contacts protein S4.

In terms of biological role, with S4 and S12 plays an important role in translational accuracy. In Staphylothermus marinus (strain ATCC 43588 / DSM 3639 / JCM 9404 / F1), this protein is Small ribosomal subunit protein uS5.